Reading from the N-terminus, the 389-residue chain is 23S rRNA (uracil(747)-C(5))-methyltransferase RlmC (389 aa).

[4Fe-4S] cluster contacts are provided by Cys12, Cys20, Cys23, and Cys99. S-adenosyl-L-methionine contacts are provided by Gln224, Phe253, Glu274, and Asn321. The Nucleophile role is filled by Cys348.

This sequence belongs to the class I-like SAM-binding methyltransferase superfamily. RNA M5U methyltransferase family. RlmC subfamily.

It carries out the reaction uridine(747) in 23S rRNA + S-adenosyl-L-methionine = 5-methyluridine(747) in 23S rRNA + S-adenosyl-L-homocysteine + H(+). Catalyzes the formation of 5-methyl-uridine at position 747 (m5U747) in 23S rRNA. The sequence is that of 23S rRNA (uracil(747)-C(5))-methyltransferase RlmC from Shewanella putrefaciens (strain CN-32 / ATCC BAA-453).